A 166-amino-acid polypeptide reads, in one-letter code: NAD(P)H-quinone oxidoreductase subunit I, chloroplastic (166 aa).

4Fe-4S ferredoxin-type domains follow at residues 55–84 (GRIH…VDWK) and 95–124 (LNYS…MTEE). [4Fe-4S] cluster contacts are provided by Cys64, Cys67, Cys70, Cys74, Cys104, Cys107, Cys110, and Cys114.

Belongs to the complex I 23 kDa subunit family. As to quaternary structure, NDH is composed of at least 16 different subunits, 5 of which are encoded in the nucleus. [4Fe-4S] cluster is required as a cofactor.

The protein resides in the plastid. It localises to the chloroplast thylakoid membrane. It carries out the reaction a plastoquinone + NADH + (n+1) H(+)(in) = a plastoquinol + NAD(+) + n H(+)(out). The enzyme catalyses a plastoquinone + NADPH + (n+1) H(+)(in) = a plastoquinol + NADP(+) + n H(+)(out). In terms of biological role, NDH shuttles electrons from NAD(P)H:plastoquinone, via FMN and iron-sulfur (Fe-S) centers, to quinones in the photosynthetic chain and possibly in a chloroplast respiratory chain. The immediate electron acceptor for the enzyme in this species is believed to be plastoquinone. Couples the redox reaction to proton translocation, and thus conserves the redox energy in a proton gradient. The chain is NAD(P)H-quinone oxidoreductase subunit I, chloroplastic from Oteiza scandens (Climbing oteiza).